Reading from the N-terminus, the 101-residue chain is Trp operon repressor homolog (101 aa).

The DNA-binding element occupies 59-82 (QREIAQKYGVSIAQITRGSNALKA).

It belongs to the TrpR family. In terms of assembly, homodimer.

The protein resides in the cytoplasm. Its function is as follows. This protein is an aporepressor. When complexed with L-tryptophan it binds the operator region of the trp operon and prevents the initiation of transcription. This chain is Trp operon repressor homolog, found in Chlamydia caviae (strain ATCC VR-813 / DSM 19441 / 03DC25 / GPIC) (Chlamydophila caviae).